Reading from the N-terminus, the 333-residue chain is MENNNKNYSHYLHSGYAHPITRSWQGDKVILKSQLIYPIFVTDLINTKTEIKSLPGQYQISSDLVVEFLRPLVEKGLKSIILFGVIISGVKDEQASSADKRESSPVIKSIELIKNEFPEILICTDLCLCAYTDHGHCGVLTEEGFIENEKSIIRLGEIALSFAKAGAHVIAPSDMMDCRVGQIKKVLFQNGYGGRVAVMAYSSKFASSYYGPFRDAAGSGAKHGDRQAYQLPIASRGLGLRAALRDEAEGADFIMVKPAGPYMDIIREVKDHVKVPVCCYQVSGEYAMIYHASVAGGIDLKSGVMESLISLQRSGCDIFITYFTPQLLDWLKL.

Positions 127, 129, and 137 each coordinate Zn(2+). The active-site Schiff-base intermediate with substrate is the Lys-204. Positions 214 and 226 each coordinate 5-aminolevulinate. Lys-257 functions as the Schiff-base intermediate with substrate in the catalytic mechanism. 5-aminolevulinate-binding residues include Ser-283 and Tyr-322.

It belongs to the ALAD family. Homooctamer. It depends on Zn(2+) as a cofactor.

The catalysed reaction is 2 5-aminolevulinate = porphobilinogen + 2 H2O + H(+). Its pathway is porphyrin-containing compound metabolism; protoporphyrin-IX biosynthesis; coproporphyrinogen-III from 5-aminolevulinate: step 1/4. Catalyzes an early step in the biosynthesis of tetrapyrroles. Binds two molecules of 5-aminolevulinate per subunit, each at a distinct site, and catalyzes their condensation to form porphobilinogen. The chain is Delta-aminolevulinic acid dehydratase (alad) from Dictyostelium discoideum (Social amoeba).